The chain runs to 538 residues: Syncytin-2 (538 aa).

The signal sequence occupies residues 1–15; it reads MGLLLLVLILTPSLA. The Extracellular portion of the chain corresponds to 16 to 478; sequence AYRHPDFPLL…GWLNWEGTWK (463 aa). The CXXC motif lies at 43-46; it reads CWLC. Intrachain disulfides connect cysteine 43–cysteine 46, cysteine 43–cysteine 439, and cysteine 431–cysteine 438. N-linked (GlcNAc...) asparagine glycosylation is found at asparagine 133, asparagine 146, asparagine 177, asparagine 220, asparagine 241, asparagine 247, asparagine 312, and asparagine 332. A fusion peptide region spans residues 354–374; it reads FIPLLAGLGILAGTGTGIAGI. A CKS-17 motif is present at residues 414-430; sequence LQNRRGLDMLTAAQGGI. The CX6CC signature appears at 431-439; sequence CLALDEKCC. Residue asparagine 443 is glycosylated (N-linked (GlcNAc...) asparagine). A helical transmembrane segment spans residues 479–499; that stretch reads WFSWVLPLTGPLVSLLLLLLF. Residues 500–538 lie on the Cytoplasmic side of the membrane; that stretch reads GPCLLNLITQFVSSRLQAIKLQTNLSAGRHPRNIQESPF.

This sequence belongs to the gamma type-C retroviral envelope protein family. HERV class-I FRD env subfamily. As to quaternary structure, the surface and transmembrane proteins form a heterodimer. They are attached by non-covalent interactions or by a labile interchain disulfide bond. Interacts with MFSD2A. Post-translationally, specific enzymatic cleavages in vivo yield the mature SU and TM proteins. In terms of processing, the CXXC motif is highly conserved across a broad range of retroviral envelope proteins. It is thought to participate in the formation of a labile disulfide bond possibly with the CX6CC motif present in the transmembrane protein. Isomerization of the intersubunit disulfide bond to an SU intrachain disulfide bond is thought to occur upon receptor recognition in order to allow membrane fusion. In terms of tissue distribution, expressed at higher level in placenta. Expressed at lower level in adrenal, bone marrow, brain, breast, colon, kidney, lung, ovary, peripheral blood lymphocytes, prostate, skin, spleen, testis, thymus, thyroid, trachea.

It localises to the virion. The protein localises to the cell membrane. In terms of biological role, this endogenous retroviral envelope protein has retained its original fusogenic properties and participates in trophoblast fusion and the formation of a syncytium during placenta morphogenesis. The interaction with MFSD2A is apparently important for this process. Endogenous envelope proteins may have kept, lost or modified their original function during evolution but this one can still make pseudotypes with MLV, HIV-1 or SIV-1 virions and confer infectivity. Retroviral envelope proteins mediate receptor recognition and membrane fusion during early infection. The surface protein mediates receptor recognition, while the transmembrane protein anchors the envelope heterodimer to the viral membrane through one transmembrane domain. The other hydrophobic domain, called fusion peptide, mediates fusion of the viral membrane with the target cell membrane. In Homo sapiens (Human), this protein is Syncytin-2 (ERVFRD-1).